The sequence spans 521 residues: DEAD-box ATP-dependent RNA helicase 12 (521 aa).

The interval 1–97 is disordered; it reads MHHPRARYPP…QQWLRRDQAT (97 aa). Over residues 13 to 50 the composition is skewed to gly residues; it reads TSGGGGGGGGGGGGGRGNGGGGFGGGGGGGGGNHGYYG. The span at 51–89 shows a compositional bias: low complexity; it reads RGPQPQPQQQHYHHQAQQLHQHQQQQQHAQRNSSSQQQQ. The Q motif signature appears at 147–175; that stretch reads NEFEDYFLKRELLMGIYEKGFERPSPIQE. Positions 178-348 constitute a Helicase ATP-binding domain; it reads IPIALTGSDI…EKYLPRPYVI (171 aa). ATP is bound at residue 191-198; the sequence is AKNGTGKT. The short motif at 296 to 299 is the DEAD box element; the sequence is DEAD. The region spanning 358–518 is the Helicase C-terminal domain; the sequence is GITQYYAFVE…TIPPQIDLAV (161 aa).

This sequence belongs to the DEAD box helicase family. DDX6/DHH1 subfamily.

It is found in the cytoplasm. Its subcellular location is the P-body. It carries out the reaction ATP + H2O = ADP + phosphate + H(+). Its function is as follows. ATP-dependent RNA helicase involved in mRNA turnover, and more specifically in mRNA decapping. This is DEAD-box ATP-dependent RNA helicase 12 from Oryza sativa subsp. japonica (Rice).